The primary structure comprises 378 residues: Queuine tRNA-ribosyltransferase (378 aa).

D93 (proton acceptor) is an active-site residue. Substrate is bound by residues 93–97 (DSGGF), D147, Q189, and G216. The segment at 247 to 253 (GVGTFRE) is RNA binding. D266 serves as the catalytic Nucleophile. Residues 271 to 275 (TRVAR) form an RNA binding; important for wobble base 34 recognition region. Zn(2+)-binding residues include C308, C310, C313, and H339.

The protein belongs to the queuine tRNA-ribosyltransferase family. In terms of assembly, homodimer. Within each dimer, one monomer is responsible for RNA recognition and catalysis, while the other monomer binds to the replacement base PreQ1. Zn(2+) serves as cofactor.

It carries out the reaction 7-aminomethyl-7-carbaguanine + guanosine(34) in tRNA = 7-aminomethyl-7-carbaguanosine(34) in tRNA + guanine. The protein operates within tRNA modification; tRNA-queuosine biosynthesis. Functionally, catalyzes the base-exchange of a guanine (G) residue with the queuine precursor 7-aminomethyl-7-deazaguanine (PreQ1) at position 34 (anticodon wobble position) in tRNAs with GU(N) anticodons (tRNA-Asp, -Asn, -His and -Tyr). Catalysis occurs through a double-displacement mechanism. The nucleophile active site attacks the C1' of nucleotide 34 to detach the guanine base from the RNA, forming a covalent enzyme-RNA intermediate. The proton acceptor active site deprotonates the incoming PreQ1, allowing a nucleophilic attack on the C1' of the ribose to form the product. After dissociation, two additional enzymatic reactions on the tRNA convert PreQ1 to queuine (Q), resulting in the hypermodified nucleoside queuosine (7-(((4,5-cis-dihydroxy-2-cyclopenten-1-yl)amino)methyl)-7-deazaguanosine). The chain is Queuine tRNA-ribosyltransferase from Gloeobacter violaceus (strain ATCC 29082 / PCC 7421).